Reading from the N-terminus, the 378-residue chain is Glutamate 5-kinase (378 aa).

Lys21 lines the ATP pocket. Ser61, Asp148, and Asn160 together coordinate substrate. Thr180–Asp181 contacts ATP. A PUA domain is found at Arg286 to Met364.

It belongs to the glutamate 5-kinase family.

Its subcellular location is the cytoplasm. It catalyses the reaction L-glutamate + ATP = L-glutamyl 5-phosphate + ADP. Its pathway is amino-acid biosynthesis; L-proline biosynthesis; L-glutamate 5-semialdehyde from L-glutamate: step 1/2. Functionally, catalyzes the transfer of a phosphate group to glutamate to form L-glutamate 5-phosphate. This chain is Glutamate 5-kinase, found in Chromohalobacter salexigens (strain ATCC BAA-138 / DSM 3043 / CIP 106854 / NCIMB 13768 / 1H11).